A 478-amino-acid chain; its full sequence is Phosphatidylinositol 4-kinase type 2-alpha (478 aa).

At methionine 1 the chain carries N-acetylmethionine. Positions 1–57 (MDETSPLVSPERAQPPEYTFPSVSGAHFPQVPGGAVRVAAAGSGPSPPCSPGHDRER) are disordered. A phosphoserine mark is found at serine 5, serine 9, serine 43, serine 46, and serine 50. Low complexity predominate over residues 31 to 44 (VPGGAVRVAAAGSG). The region spanning 123 to 452 (SIYPERIYQG…VQMPPVIVET (330 aa)) is the PI3K/PI4K catalytic domain. Residues 129-135 (IYQGSSG) are G-loop. ATP is bound by residues 130–136 (YQGSSGS) and lysine 151. An important for substrate binding region spans residues 156-158 (EPY). Residues 164–177 (KWTKWLQKLCCPCC) form an important for interaction with membranes region. Residues cysteine 173, cysteine 174, cysteine 176, and cysteine 177 are each lipidated (S-palmitoyl cysteine). 260–263 (QLFV) contacts ATP. Residues 267-275 (KDADYWLRR) are important for interaction with membranes. The catalytic loop stretch occupies residues 304–312 (RNTDRGNDN). The tract at residues 343–363 (AIDNGLAFPLKHPDSWRAYPF) is activation loop. Residue aspartate 345 participates in ATP binding. Residues 358–367 (WRAYPFYWAW) are important for interaction with membranes. Serine 461 bears the Phosphoserine mark.

The protein belongs to the PI3/PI4-kinase family. Type II PI4K subfamily. In terms of assembly, associates with the BLOC-1 and the AP-3 complexes; the BLOC-1 complex is required for optimal binding of PI4K2A to the AP-3 complex. Interacts with BLOC1S5 and DTNBP1. Interacts with FOS; this interaction may enhance phosphatidylinositol phosphorylation activity. Interacts with ITCH. Interacts with ATG9A. In terms of processing, ubiquitinated by ITCH; this does not lead to proteasomal degradation. Palmitoylated. Palmitoylated by ZDHHC3 and ZDHHC7 in the CCPCC motif. Palmitoylation is cholesterol-dependent, and required for TGN localization. Detected in adult brain, especially in neurons in the cerebellum, brain cortex, dorsal root ganglion and spinal cord (at protein level).

Its subcellular location is the golgi apparatus. The protein localises to the trans-Golgi network membrane. It localises to the membrane raft. The protein resides in the endosome. It is found in the endosome membrane. Its subcellular location is the cytoplasmic vesicle. The protein localises to the cell projection. It localises to the dendrite. The protein resides in the presynaptic cell membrane. It is found in the synapse. Its subcellular location is the synaptosome. The protein localises to the mitochondrion. It localises to the membrane. The protein resides in the cell membrane. It is found in the perikaryon. Its subcellular location is the neuron projection. It carries out the reaction a 1,2-diacyl-sn-glycero-3-phospho-(1D-myo-inositol) + ATP = a 1,2-diacyl-sn-glycero-3-phospho-(1D-myo-inositol 4-phosphate) + ADP + H(+). Membrane-bound phosphatidylinositol-4 kinase (PI4-kinase) that catalyzes the phosphorylation of phosphatidylinositol (PI) to phosphatidylinositol 4-phosphate (PI4P), a lipid that plays important roles in endocytosis, Golgi function, protein sorting and membrane trafficking and is required for prolonged survival of neurons. Besides, phosphorylation of phosphatidylinositol (PI) to phosphatidylinositol 4-phosphate (PI4P) is the first committed step in the generation of phosphatidylinositol 4,5-bisphosphate (PIP2), a precursor of the second messenger inositol 1,4,5-trisphosphate (InsP3). This chain is Phosphatidylinositol 4-kinase type 2-alpha (Pi4k2a), found in Rattus norvegicus (Rat).